The sequence spans 454 residues: MLSRSRCVSRAFSRSLSAFQKGNCPLGRRSLPGVSLCRGPGYPDNRKMVINSGSVFRVRFFQTTAVCKNDVITVQTPAFAESVTEGDVRWEKAVGDAVAEDEVVCEIETDKTSVQVPSPANGIIEALLVPDGGKVEGGTPLFTLRKTGAAPAKAKPAETPAPAHKAEPAAPAAPPPPAAPVLTQMPPVPSPSQPPSSKPVSAIKPTAAPPLAEAGAAKGLRSEHREKMNRMRQRIAQRLKEAQNTCAMLTTFNEVDMSNIQEMRARHKDAFLKKHNLKLGFMSAFVKASAFALQEQPVVNAVIDDATKEVVYRDYIDISVAVATPRGLVVPVIRNVETMNYADIERTINELGEKARKNELAIEDMDGGTFTISNGGVFGSLFGTPIINPPQSAILGMHAIFDRPVAVGGKVEVRPMMYVALTYDHRLIDGREAVTFLRKIKAAVEDPRVLLLDL.

The transit peptide at M1–K68 directs the protein to the mitochondrion. The Lipoyl-binding domain occupies V71–R145. S82 carries the phosphoserine modification. K111 bears the N6-lipoyllysine mark. Residues T147–K227 are disordered. Residues A149 to A163 show a composition bias toward low complexity. Residue K155 is modified to N6-acetyllysine. Residues P186–S197 are compositionally biased toward pro residues. A compositionally biased stretch (low complexity) spans K198 to A217. An N6-acetyllysine mark is found at K268, K273, K274, K278, and K308. Residues H425 and D429 contribute to the active site.

The protein belongs to the 2-oxoacid dehydrogenase family. In terms of assembly, the 2-oxoglutarate dehydrogenase complex is composed of OGDH (2-oxoglutarate dehydrogenase; E1), DLST (dihydrolipoamide succinyltransferase; E2), DLD (dihydrolipoamide dehydrogenase; E3) and the assembly factor KGD4. It contains multiple copies of the three enzymatic components (E1, E2 and E3). In the nucleus, the 2-oxoglutarate dehydrogenase complex associates with KAT2A. Interacts with ABHD11; this interaction maintains the functional lipoylation of the 2-oxoglutarate dehydrogenase complex. It depends on (R)-lipoate as a cofactor.

It localises to the mitochondrion matrix. The protein resides in the nucleus. It catalyses the reaction N(6)-[(R)-dihydrolipoyl]-L-lysyl-[protein] + succinyl-CoA = N(6)-[(R)-S(8)-succinyldihydrolipoyl]-L-lysyl-[protein] + CoA. The protein operates within amino-acid degradation; L-lysine degradation via saccharopine pathway; glutaryl-CoA from L-lysine: step 6/6. Its pathway is carbohydrate metabolism; tricarboxylic acid cycle. Its function is as follows. Dihydrolipoamide succinyltransferase (E2) component of the 2-oxoglutarate dehydrogenase complex. The 2-oxoglutarate dehydrogenase complex catalyzes the overall conversion of 2-oxoglutarate to succinyl-CoA and CO(2). The 2-oxoglutarate dehydrogenase complex is mainly active in the mitochondrion. A fraction of the 2-oxoglutarate dehydrogenase complex also localizes in the nucleus and is required for lysine succinylation of histones: associates with KAT2A on chromatin and provides succinyl-CoA to histone succinyltransferase KAT2A. In Mus musculus (Mouse), this protein is Dihydrolipoyllysine-residue succinyltransferase component of 2-oxoglutarate dehydrogenase complex, mitochondrial.